The primary structure comprises 726 residues: uncharacterized protein (726 aa).

In terms of domain architecture, Thioredoxin spans 10-135 (MRISWVVAFI…LLDFVETHLN (126 aa)). Disordered regions lie at residues 133–153 (HLNP…TDED) and 227–280 (VTSV…NPTG). Residues 138 to 153 (TDPDIPSDEDVLTDED) are compositionally biased toward acidic residues. Residues 675–695 (IRVLYMVLGIVTVGILVWYFS) traverse the membrane as a helical segment. Position 708 is a phosphoserine (Ser708).

It localises to the membrane. This is an uncharacterized protein from Schizosaccharomyces pombe (strain 972 / ATCC 24843) (Fission yeast).